The primary structure comprises 505 residues: Lysine--tRNA ligase (505 aa).

Mg(2+)-binding residues include glutamate 415 and glutamate 422.

Belongs to the class-II aminoacyl-tRNA synthetase family. In terms of assembly, homodimer. Mg(2+) is required as a cofactor.

The protein localises to the cytoplasm. It carries out the reaction tRNA(Lys) + L-lysine + ATP = L-lysyl-tRNA(Lys) + AMP + diphosphate. This Cronobacter sakazakii (strain ATCC BAA-894) (Enterobacter sakazakii) protein is Lysine--tRNA ligase.